The sequence spans 509 residues: Pituitary homeobox homolog Ptx1 (509 aa).

Low complexity predominate over residues 70 to 98; that stretch reads NGAGSAGSAESATTTSTALSSGSTGSSTV. Disordered stretches follow at residues 70–125, 148–171, and 204–273; these read NGAG…SSVS, QDLVGGYSQHPHHTVVPPHTPKHE, and LNNF…HFTS. Residues 227–242 are compositionally biased toward polar residues; the sequence is RSVNETTIKTENISSS. The segment covering 243–258 has biased composition (basic and acidic residues); sequence GHDEPMTTSGEEPKND. Residues 259 to 269 show a composition bias toward basic residues; sequence KKNKRQRRQRT. The homeobox DNA-binding region spans 262–322; the sequence is KRQRRQRTHF…KNRRAKWRKR (61 aa). Positions 460-473 match the OAR motif; the sequence is SSIATLRLKAKQHA. A Nuclear localization signal motif is present at residues 464-470; sequence TLRLKAK.

This sequence belongs to the paired homeobox family. Bicoid subfamily.

The protein resides in the nucleus. In terms of biological role, appears to control physiological cell functions rather than pattern formation during embryogenesis. The protein is Pituitary homeobox homolog Ptx1 (Ptx1) of Drosophila melanogaster (Fruit fly).